The chain runs to 874 residues: S-layer protein (874 aa).

A signal peptide spans Met-1–Ala-30. SLH domains lie at Gly-31–Pro-93, Ser-94–Gly-151, and Thr-152–Asp-214.

It localises to the secreted. The protein resides in the cell wall. The protein localises to the S-layer. In terms of biological role, the S-layer is a paracrystalline mono-layered assembly of proteins which coat the surface of bacteria. The protein is S-layer protein of Bacillus licheniformis.